Reading from the N-terminus, the 687-residue chain is MAKKAKNSEKNGPRHSGNFSQESGISGNLWLATVVLIGLFVGFLNYQHIYTLFENDKHFSHLADFEREMAYRTEMGLYYSYYKTIITAPSFLEGVQLITRDTVTEHGHQINTLNRFNLYPEVILAFLYRPFRALAKSANWQVETCWQVNRGDLRPVESCEGIGNPHYFYITGVFVVAGTVATSLFYLGVLVSDSIFGGILSVLCFAFNHGEATRVQWTPPLRESFAFPFIIGHIAILTYIIKYRKSSTAHLLLLISAAVPALLFWQFTQFAFFTQICSIFAAFSMDLVPLDTAKTIIKSHLSAFFISFVMLFGNEMMIAALYFPSIWALATVIYISPMLAGIRLRPLYLLILALIFGSITLGLKVGFSKGLGIEDDAHIFDILRSKFTSFANFHTRLYTCSAEFDFIQYATIEKLSSTLLIPLALLSIGAFSWDFLSKTSLLWRTLENEDSEYGEVIYNLVQLICSTTMAVLIMRLKLFMTPHLCITVALLANSKLLGGDKIAKTVRSSVLVGLVAMLAFRGIPNIRHQLNIKGEYSNPDQEMLFDWIQSNTKQDAVFAGTMPVMANVKLTTLRPIVNHPHYEHVGIRDRTLKVYSMFSKKPVAEVHQTMKKMGVNYFIFQLMNCSNDERRPECVYRGMWDEEDPKNSARTSLCDLWILAANSKDNSRISPFKIVYNPNRNYIVLKI.

Transmembrane regions (helical) follow at residues 24–44 (GISGNLWLATVVLIGLFVGFL), 170–190 (ITGVFVVAGTVATSLFYLGVL), 191–211 (VSDSIFGGILSVLCFAFNHGE), 223–243 (ESFAFPFIIGHIAILTYIIKY), 253–273 (LLISAAVPALLFWQFTQFAFF), 276–296 (ICSIFAAFSMDLVPLDTAKTI), 303–323 (AFFISFVMLFGNEMMIAALYF), 324–344 (PSIWALATVIYISPMLAGIRL), 347–367 (LYLLILALIFGSITLGLKVGF), 415–435 (LSSTLLIPLALLSIGAFSWDF), and 454–474 (GEVIYNLVQLICSTTMAVLIM).

The protein belongs to the dpy-19 family.

It is found in the endoplasmic reticulum membrane. Functionally, C-mannosyltransferase that mediates C-mannosylation of tryptophan residues on target proteins such as unc-5 and mig-21. Mediates the attachment of alpha-mannose in C-C linkage to the C2 of the indole ring of tryptophan. C-mannosylation takes place in the endoplasmic reticulum and frequently found in thrombospondin (TSP) type-1 repeats and in the WSXWS motif of type I cytokine receptors. Required to orient neuroblasts QL and QR correctly on the anterior/posterior (A/P) axis: QL and QR are born in the same A/P position, but polarize and migrate left/right asymmetrically, QL migrates toward the posterior and QR migrates toward the anterior. Required with unc-40 to express mab-5 correctly in the Q cell descendants. This Caenorhabditis briggsae protein is C-mannosyltransferase dpy-19.